Consider the following 300-residue polypeptide: m7GpppN-mRNA hydrolase NUDT17 (300 aa).

The Nudix hydrolase domain occupies 88 to 239 (SRGVDVGVAV…KECVQIPADL (152 aa)). The short motif at 127–148 (GHVELDEKLLDAGLRELLEETG) is the Nudix box element. Positions 142 and 146 each coordinate Mg(2+).

It belongs to the Nudix hydrolase family. The cofactor is Mg(2+). Mn(2+) serves as cofactor.

It carries out the reaction a 5'-end (N(7)-methyl 5'-triphosphoguanosine)-ribonucleoside in mRNA + H2O = N(7)-methyl-GDP + a 5'-end phospho-ribonucleoside in mRNA + 2 H(+). In terms of biological role, acts as a decapping enzyme capable of hydrolyzing monomethylated capped RNAs (in vitro). Hydrolyzes monomethylated capped RNA after alpha and beta phosphates to form N(7)-methyl-GDP. Shows low activity towards unmethylated capped RNA. The protein is m7GpppN-mRNA hydrolase NUDT17 (nudt17) of Danio rerio (Zebrafish).